The chain runs to 286 residues: MVPMNDFWVKAILSSTNPSPVPSTTSTVSNDENLDKTLDFDCSTQTVFPTLPMFWNPTLVQQMLALYQIQQQQIQFSAKLAPQPLFQEPTIQKEFLPFPHQSRKRPLPIDPKKTKLRKLNEDTVTSSPVSGMFIKEEADVKSVEELQKEADLLDETAAYVEVTEESRQKIDEIPNVIGDCICRLCKVKYEDVFKLAQHKCPRIAHEEYKCPDCDKVFSCPANLASHRRWHKPRNELGGSPPAQSSTIVSCSTCFNSFPTKKMLKLHSSTCQRSPLQDLLSRVIPTM.

Residues cysteine 180 to cysteine 200 form a C2H2-type 1; atypical zinc finger. 2 consecutive C2H2-type zinc fingers follow at residues tyrosine 208 to histidine 230 and valine 248 to glutamine 271.

This sequence belongs to the INSM1 family. As to quaternary structure, interacts (via C-terminus) with egl-44 (via N-terminus); the interaction is direct; the interaction may regulate transcription. In terms of tissue distribution, expressed in touch cells, HSN cells, ventral cord motor neurons and ciliated ray neurons.

The protein localises to the nucleus. Its function is as follows. Transcription factor. Represses expression of genes involved in differentiation of touch receptor neurons (TRN), probably acting as a heterodimer with egl-44, perhaps by occupying similar cis-regulatory elements as an unc-86/mec-3 heterodimer. Plays a role in cell fate specification of neurons, including the hook neuron HOB, the gas-sensing neuron BAG and touch receptor neurons. Plays a role in neuron differentiation by repressing the expression of zag-1 in FLP neurons, probably acting as a heterodimer with egl-44; because zag-1 represses expression of egl-46 and egl-44, together these proteins form a bistable, negative-feedback loop that regulates the choice between neuronal fates. Acts downstream of egl-44 to prevent touch cell differentiation in FLP neurons. Involved in male mating behavior, acting in concert with egl-44, via modulation of expression of polycystins lov-1 and pkd-2, homeodomain protein ceh-26, and neuropeptide-like protein nlp-8. Modulates the expression of a subset of terminal differentiation genes involved in O(2)- and CO(2)-sensing, acting in parallel to ets-5 and egl-13. May act upstream of RFX transcription factor daf-19 to regulate gene expression specifically in the HOB neuron. Plays a role in specifying commissural dendrites of the PVD nociceptive neurons, acting in concert with egl-44. In association with egl-44, regulates cell cycle exit in the neuronal Q cell lineage. This Caenorhabditis elegans protein is Transcription factor egl-46.